The primary structure comprises 95 residues: uncharacterized protein (95 aa).

Residues 27–47 traverse the membrane as a helical segment; that stretch reads SFGLAIIGILLIACEIILFLT.

The protein localises to the membrane. This is an uncharacterized protein from Homo sapiens (Human).